Consider the following 387-residue polypeptide: Alpha-sarcoglycan (387 aa).

An N-terminal signal peptide occupies residues 1 to 23 (MAAAVTWIPLLAGLLAGLRDTKA). At 24-293 (QQTTLHLLVG…RDFLTDALVT (270 aa)) the chain is on the extracellular side. N-linked (GlcNAc...) asparagine glycans are attached at residues Asn-174 and Asn-246. Residues 294 to 314 (LLVPLLVALLLTLLLAYIMCF) form a helical membrane-spanning segment. Residues 315-387 (RREGRLKRDM…AQMPLILDQH (73 aa)) are Cytoplasmic-facing. A Phosphoserine modification is found at Ser-377.

This sequence belongs to the sarcoglycan alpha/epsilon family. In terms of assembly, cross-link to form 2 major subcomplexes: one consisting of SGCB, SGCD and SGCG and the other consisting of SGCB and SGCD. The association between SGCB and SGCG is particularly strong while SGCA is loosely associated with the other sarcoglycans. Interacts with the syntrophin SNTA1. As to expression, striated muscle, both skeletal and cardiac.

Its subcellular location is the cell membrane. The protein localises to the sarcolemma. It localises to the cytoplasm. The protein resides in the cytoskeleton. Component of the sarcoglycan complex, a subcomplex of the dystrophin-glycoprotein complex which forms a link between the F-actin cytoskeleton and the extracellular matrix. The polypeptide is Alpha-sarcoglycan (Sgca) (Mus musculus (Mouse)).